A 55-amino-acid chain; its full sequence is Large ribosomal subunit protein bL33 (55 aa).

Post-translationally, the protein is methylated on either Ala-2 or Lys-3.

In Rhodopseudomonas palustris (strain ATCC BAA-98 / CGA009), this protein is Large ribosomal subunit protein bL33.